The primary structure comprises 316 residues: Serpentine receptor class gamma-8 (316 aa).

The next 7 membrane-spanning stretches (helical) occupy residues 28–48 (FVQV…LYVV), 60–80 (PFFM…IFIT), 106–126 (LYYP…IFLT), 147–167 (FSRI…NTII), 186–206 (IIPW…VVMI), 235–255 (ACAA…MKVL), and 267–287 (LVQP…MIFA).

This sequence belongs to the nematode receptor-like protein srg family.

The protein resides in the membrane. In Caenorhabditis elegans, this protein is Serpentine receptor class gamma-8 (srg-8).